A 313-amino-acid polypeptide reads, in one-letter code: NADH-ubiquinone oxidoreductase chain 1 (313 aa).

The next 8 helical transmembrane spans lie at 7–27 (LIGSLLLVICVMVGVAFLTLL), 73–93 (IFYYFSPIFSLFLSLLIWMSM), 104–124 (LGVLFFLCITSLGVYTVMVAG), 150–170 (LALILLSFIFLIGNYNFLNFF), 175–195 (YMWFIVFCFPLGLVWFASCLA), 226–246 (LIFLAEYSSILFMSMLFSVIF), 250–270 (DIYSILFFFKLTIISFFFIWV), and 293–313 (MSLNYLFFFIGVKIFILSMLF).

This sequence belongs to the complex I subunit 1 family.

The protein resides in the mitochondrion inner membrane. The catalysed reaction is a ubiquinone + NADH + 5 H(+)(in) = a ubiquinol + NAD(+) + 4 H(+)(out). Functionally, core subunit of the mitochondrial membrane respiratory chain NADH dehydrogenase (Complex I) that is believed to belong to the minimal assembly required for catalysis. Complex I functions in the transfer of electrons from NADH to the respiratory chain. The immediate electron acceptor for the enzyme is believed to be ubiquinone. The protein is NADH-ubiquinone oxidoreductase chain 1 of Aedes aegypti (Yellowfever mosquito).